A 342-amino-acid polypeptide reads, in one-letter code: Cathepsin B-like cysteine proteinase 2 (342 aa).

The signal sequence occupies residues 1–18; the sequence is MKYLVLALCTYLCSQSGA. A propeptide spans 19-86 (activation peptide); that stretch reads DENAAQGIPL…VKEDPDPEVD (68 aa). Residue Asn-99 is glycosylated (N-linked (GlcNAc...) asparagine). 6 disulfide bridges follow: Cys-100–Cys-128, Cys-111–Cys-156, Cys-147–Cys-214, Cys-148–Cys-152, Cys-185–Cys-218, and Cys-193–Cys-205. Cys-114 is a catalytic residue. Asn-138 is a glycosylation site (N-linked (GlcNAc...) asparagine). Asn-198 carries an N-linked (GlcNAc...) asparagine glycan. His-285 is a catalytic residue. N-linked (GlcNAc...) asparagine glycosylation occurs at Asn-296. Residue Asn-305 is part of the active site.

It belongs to the peptidase C1 family.

Expression of the protease correlates with blood-feeding and suggests a role for the protease in blood digestion. This Haemonchus contortus (Barber pole worm) protein is Cathepsin B-like cysteine proteinase 2 (AC-2).